The chain runs to 516 residues: Phosphatidylserine decarboxylase proenzyme 2, mitochondrial (516 aa).

The transit peptide at 1–21 (MRPRQRFRRFHPRWSKVNLRG) directs the protein to the mitochondrion. Topologically, residues 22–33 (FGGVGALKGVKA) are mitochondrial matrix. Residues 34 to 52 (LNGMNVRVSMRLKWISNRI) form a helical membrane-spanning segment. At 53-516 (HRIRRSRRLG…GQYVRVGEAL (464 aa)) the chain is on the mitochondrial intermembrane side. Active-site charge relay system; for autoendoproteolytic cleavage activity residues include D159, H373, and S488. Residue S488 is the Schiff-base intermediate with substrate; via pyruvic acid; for decarboxylase activity of the active site. S488 carries the pyruvic acid (Ser); by autocatalysis modification.

This sequence belongs to the phosphatidylserine decarboxylase family. PSD-B subfamily. Eukaryotic type I sub-subfamily. In terms of assembly, heterodimer of a large membrane-associated beta subunit and a small pyruvoyl-containing alpha subunit. Pyruvate is required as a cofactor. Is synthesized initially as an inactive proenzyme. Formation of the active enzyme involves a self-maturation process in which the active site pyruvoyl group is generated from an internal serine residue via an autocatalytic post-translational modification. Two non-identical subunits are generated from the proenzyme in this reaction, and the pyruvate is formed at the N-terminus of the alpha chain, which is derived from the carboxyl end of the proenzyme. The autoendoproteolytic cleavage occurs by a canonical serine protease mechanism, in which the side chain hydroxyl group of the serine supplies its oxygen atom to form the C-terminus of the beta chain, while the remainder of the serine residue undergoes an oxidative deamination to produce ammonia and the pyruvoyl prosthetic group on the alpha chain. During this reaction, the Ser that is part of the protease active site of the proenzyme becomes the pyruvoyl prosthetic group, which constitutes an essential element of the active site of the mature decarboxylase.

Its subcellular location is the mitochondrion. It is found in the mitochondrion inner membrane. It localises to the nucleus envelope. The protein resides in the lipid droplet. The protein localises to the endoplasmic reticulum membrane. It carries out the reaction a 1,2-diacyl-sn-glycero-3-phospho-L-serine + H(+) = a 1,2-diacyl-sn-glycero-3-phosphoethanolamine + CO2. Its pathway is phospholipid metabolism; phosphatidylethanolamine biosynthesis; phosphatidylethanolamine from CDP-diacylglycerol: step 2/2. Its function is as follows. Catalyzes the formation of phosphatidylethanolamine (PtdEtn) from phosphatidylserine (PtdSer). Plays a central role in phospholipid metabolism and in the interorganelle trafficking of phosphatidylserine. Together with psd1 and psd3, responsible for the majority of phosphatidylethanolamine synthesis. Plays a role in lipid droplet biogenesis at the endoplasmic reticulum membrane. The sequence is that of Phosphatidylserine decarboxylase proenzyme 2, mitochondrial from Schizosaccharomyces pombe (strain 972 / ATCC 24843) (Fission yeast).